Consider the following 578-residue polypeptide: Asparagine synthetase [glutamine-hydrolyzing] 3 (578 aa).

Cys2 functions as the For GATase activity in the catalytic mechanism. Residues 2–185 form the Glutamine amidotransferase type-2 domain; it reads CGILAVLGCV…PGHIYSSKQG (184 aa). L-glutamine-binding positions include 50 to 54, 75 to 77, and Asp98; these read RLAIV and NGE. The 241-residue stretch at 210-450 folds into the Asparagine synthetase domain; that stretch reads VRNTFEKAVI…LPKHILYRQK (241 aa). Residues Leu231, Ile267, and 341–342 contribute to the ATP site; that span reads SG. The segment covering 555-572 has biased composition (basic and acidic residues); sequence GEDKTEDSRPEKLQKLAE. The disordered stretch occupies residues 555-578; the sequence is GEDKTEDSRPEKLQKLAEKTPAIV.

The catalysed reaction is L-aspartate + L-glutamine + ATP + H2O = L-asparagine + L-glutamate + AMP + diphosphate + H(+). It functions in the pathway amino-acid biosynthesis; L-asparagine biosynthesis. Essential for nitrogen assimilation, distribution and remobilization within the plant via the phloem. The sequence is that of Asparagine synthetase [glutamine-hydrolyzing] 3 (ASN3) from Arabidopsis thaliana (Mouse-ear cress).